Consider the following 198-residue polypeptide: Molybdopterin synthase catalytic subunit (198 aa).

A compositionally biased stretch (low complexity) spans Met-1 to Pro-27. Positions Met-1–Ser-40 are disordered. Substrate contacts are provided by residues His-143–Arg-144, Lys-159, and Lys-166–Glu-168. Residues Glu-176–Glu-198 are disordered.

It belongs to the MoaE family. MOCS2B subfamily. Heterotetramer; composed of 2 small (MOCS2A) and 2 large (MOCS2B) subunits.

The protein localises to the cytoplasm. It catalyses the reaction 2 [molybdopterin-synthase sulfur-carrier protein]-C-terminal-Gly-aminoethanethioate + cyclic pyranopterin phosphate + H2O = molybdopterin + 2 [molybdopterin-synthase sulfur-carrier protein]-C-terminal Gly-Gly + 2 H(+). It participates in cofactor biosynthesis; molybdopterin biosynthesis. Its function is as follows. Catalytic subunit of the molybdopterin synthase complex, a complex that catalyzes the conversion of precursor Z into molybdopterin. Acts by mediating the incorporation of 2 sulfur atoms from thiocarboxylated MOCS2A into precursor Z to generate a dithiolene group. This is Molybdopterin synthase catalytic subunit from Aspergillus clavatus (strain ATCC 1007 / CBS 513.65 / DSM 816 / NCTC 3887 / NRRL 1 / QM 1276 / 107).